Consider the following 458-residue polypeptide: Dihydrolipoyl dehydrogenase (458 aa).

Residues 30 to 38 (DKGKLGGTC), lysine 47, and alanine 112 contribute to the FAD site. The cysteines at positions 38 and 43 are disulfide-linked. NAD(+) is bound by residues 177-181 (GGGVI), glutamate 200, and 263-266 (AIGR). Positions 305 and 313 each coordinate FAD. The Proton acceptor role is filled by histidine 437.

This sequence belongs to the class-I pyridine nucleotide-disulfide oxidoreductase family. Homodimer. FAD serves as cofactor.

Its subcellular location is the cytoplasm. It catalyses the reaction N(6)-[(R)-dihydrolipoyl]-L-lysyl-[protein] + NAD(+) = N(6)-[(R)-lipoyl]-L-lysyl-[protein] + NADH + H(+). It participates in ketone degradation; acetoin degradation. This is Dihydrolipoyl dehydrogenase (acoL) from Bacillus subtilis (strain 168).